The sequence spans 473 residues: Fumarate hydratase class II (473 aa).

Substrate-binding positions include S105–T107, H130–D133, S140–N142, and T188. H189 serves as the catalytic Proton donor/acceptor. Residue S319 is part of the active site. Substrate is bound by residues S320 and K325 to N327.

It belongs to the class-II fumarase/aspartase family. Fumarase subfamily. As to quaternary structure, homotetramer.

The protein localises to the cytoplasm. It carries out the reaction (S)-malate = fumarate + H2O. Its pathway is carbohydrate metabolism; tricarboxylic acid cycle; (S)-malate from fumarate: step 1/1. In terms of biological role, involved in the TCA cycle. Catalyzes the stereospecific interconversion of fumarate to L-malate. The polypeptide is Fumarate hydratase class II (Xylella fastidiosa (strain 9a5c)).